The sequence spans 264 residues: 3-methyl-2-oxobutanoate hydroxymethyltransferase (264 aa).

Positions 45 and 84 each coordinate Mg(2+). Residues 45-46 (DS), Asp-84, and Lys-112 contribute to the 3-methyl-2-oxobutanoate site. Glu-114 is a binding site for Mg(2+). Residue Glu-181 is the Proton acceptor of the active site.

Belongs to the PanB family. As to quaternary structure, homodecamer; pentamer of dimers. Requires Mg(2+) as cofactor.

The protein localises to the cytoplasm. It catalyses the reaction 3-methyl-2-oxobutanoate + (6R)-5,10-methylene-5,6,7,8-tetrahydrofolate + H2O = 2-dehydropantoate + (6S)-5,6,7,8-tetrahydrofolate. It functions in the pathway cofactor biosynthesis; (R)-pantothenate biosynthesis; (R)-pantoate from 3-methyl-2-oxobutanoate: step 1/2. In terms of biological role, catalyzes the reversible reaction in which hydroxymethyl group from 5,10-methylenetetrahydrofolate is transferred onto alpha-ketoisovalerate to form ketopantoate. This is 3-methyl-2-oxobutanoate hydroxymethyltransferase from Shewanella halifaxensis (strain HAW-EB4).